The sequence spans 336 residues: Sulfate/thiosulfate import ATP-binding protein CysA (336 aa).

Residues 3–233 enclose the ABC transporter domain; sequence ITIENVSKSF…PASPFVMSFI (231 aa). 35–42 contributes to the ATP binding site; sequence GPSGSGKS.

It belongs to the ABC transporter superfamily. Sulfate/tungstate importer (TC 3.A.1.6) family. The complex is composed of two ATP-binding proteins (CysA), two transmembrane proteins (CysT and CysW) and a solute-binding protein (CysP).

It is found in the cell inner membrane. It carries out the reaction sulfate(out) + ATP + H2O = sulfate(in) + ADP + phosphate + H(+). It catalyses the reaction thiosulfate(out) + ATP + H2O = thiosulfate(in) + ADP + phosphate + H(+). Part of the ABC transporter complex CysAWTP involved in sulfate/thiosulfate import. Responsible for energy coupling to the transport system. The protein is Sulfate/thiosulfate import ATP-binding protein CysA of Thermosynechococcus vestitus (strain NIES-2133 / IAM M-273 / BP-1).